We begin with the raw amino-acid sequence, 260 residues long: Putative nudix hydrolase 6 (260 aa).

Residues 113–257 form the Nudix hydrolase domain; that stretch reads PNHAADPIVS…SHFIDLLKES (145 aa). The Nudix box motif lies at 148 to 170; that stretch reads GMVDAGEHVSQTLRREFAEEAMH. Residues Glu163 and Glu167 each contribute to the Mg(2+) site.

The protein belongs to the Nudix hydrolase family. It depends on Mg(2+) as a cofactor. Requires Mn(2+) as cofactor.

In terms of biological role, probably mediates the hydrolysis of some nucleoside diphosphate derivatives. This is Putative nudix hydrolase 6 (ndx-6) from Caenorhabditis elegans.